The following is a 576-amino-acid chain: Laccase-1 (576 aa).

The first 19 residues, 1 to 19 (MARTTFLVSVSLFVSAVLA), serve as a signal peptide directing secretion. Plastocyanin-like domains follow at residues 21 to 145 (TVEY…LVIY) and 157 to 304 (VDDE…LVYE). N-linked (GlcNAc...) asparagine glycosylation is present at N41. 4 residues coordinate Cu cation: H82, H84, H127, and H129. An intrachain disulfide couples C103 to C562. Residues N182, N228, N294, and N368 are each glycosylated (N-linked (GlcNAc...) asparagine). In terms of domain architecture, Plastocyanin-like 3 spans 376 to 576 (DESKLVPLEY…NWLKSNPGQL (201 aa)). Cu cation contacts are provided by H471, H474, H476, H523, C524, H525, and H529.

This sequence belongs to the multicopper oxidase family. As to quaternary structure, homodimer. It depends on Cu cation as a cofactor. In terms of tissue distribution, in mycelia, at a lower level than LCC4.

The protein localises to the secreted. The catalysed reaction is 4 hydroquinone + O2 = 4 benzosemiquinone + 2 H2O. Functionally, lignin degradation and detoxification of lignin-derived products. The chain is Laccase-1 (LCC1) from Thanatephorus cucumeris (Black scurf of potato).